The sequence spans 205 residues: Holliday junction branch migration complex subunit RuvA (205 aa).

The segment at methionine 1 to leucine 64 is domain I. Residues serine 65–isoleucine 143 form a domain II region. The tract at residues glycine 144–valine 153 is flexible linker. Positions valine 153 to arginine 205 are domain III.

It belongs to the RuvA family. Homotetramer. Forms an RuvA(8)-RuvB(12)-Holliday junction (HJ) complex. HJ DNA is sandwiched between 2 RuvA tetramers; dsDNA enters through RuvA and exits via RuvB. An RuvB hexamer assembles on each DNA strand where it exits the tetramer. Each RuvB hexamer is contacted by two RuvA subunits (via domain III) on 2 adjacent RuvB subunits; this complex drives branch migration. In the full resolvosome a probable DNA-RuvA(4)-RuvB(12)-RuvC(2) complex forms which resolves the HJ.

It localises to the cytoplasm. Its function is as follows. The RuvA-RuvB-RuvC complex processes Holliday junction (HJ) DNA during genetic recombination and DNA repair, while the RuvA-RuvB complex plays an important role in the rescue of blocked DNA replication forks via replication fork reversal (RFR). RuvA specifically binds to HJ cruciform DNA, conferring on it an open structure. The RuvB hexamer acts as an ATP-dependent pump, pulling dsDNA into and through the RuvAB complex. HJ branch migration allows RuvC to scan DNA until it finds its consensus sequence, where it cleaves and resolves the cruciform DNA. The chain is Holliday junction branch migration complex subunit RuvA from Rhizobium meliloti (strain 1021) (Ensifer meliloti).